The sequence spans 260 residues: Lipid II isoglutaminyl synthase (glutamine-hydrolyzing) subunit GatD (260 aa).

In terms of domain architecture, GATase cobBQ-type spans 16–214; it reads QLNIAHLYGN…FHGPILSRNA (199 aa). The active-site Nucleophile is cysteine 107. Position 142 (arginine 142) interacts with substrate. The active site involves histidine 206.

This sequence belongs to the CobB/CobQ family. GatD subfamily. In terms of assembly, forms a heterodimer with MurT.

The catalysed reaction is beta-D-GlcNAc-(1-&gt;4)-Mur2Ac(oyl-L-Ala-gamma-D-Glu-L-Lys-D-Ala-D-Ala)-di-trans,octa-cis-undecaprenyl diphosphate + L-glutamine + ATP + H2O = beta-D-GlcNAc-(1-&gt;4)-Mur2Ac(oyl-L-Ala-D-isoglutaminyl-L-Lys-D-Ala-D-Ala)-di-trans,octa-cis-undecaprenyl diphosphate + L-glutamate + ADP + phosphate + H(+). The enzyme catalyses L-glutamine + H2O = L-glutamate + NH4(+). Its pathway is cell wall biogenesis; peptidoglycan biosynthesis. Its function is as follows. The lipid II isoglutaminyl synthase complex catalyzes the formation of alpha-D-isoglutamine in the cell wall lipid II stem peptide. The GatD subunit catalyzes the hydrolysis of glutamine to glutamate and ammonia. The resulting ammonia molecule is channeled to the active site of MurT. This is Lipid II isoglutaminyl synthase (glutamine-hydrolyzing) subunit GatD from Streptococcus pneumoniae (strain ATCC BAA-255 / R6).